We begin with the raw amino-acid sequence, 106 residues long: ATP-dependent Clp protease adapter protein ClpS (106 aa).

This sequence belongs to the ClpS family. As to quaternary structure, binds to the N-terminal domain of the chaperone ClpA.

Functionally, involved in the modulation of the specificity of the ClpAP-mediated ATP-dependent protein degradation. The protein is ATP-dependent Clp protease adapter protein ClpS of Escherichia fergusonii (strain ATCC 35469 / DSM 13698 / CCUG 18766 / IAM 14443 / JCM 21226 / LMG 7866 / NBRC 102419 / NCTC 12128 / CDC 0568-73).